A 205-amino-acid polypeptide reads, in one-letter code: Probable DNA-binding protein (205 aa).

The segment at Gly-140–Gly-168 is disordered.

The sequence is that of Probable DNA-binding protein from Homo sapiens (Human).